The sequence spans 359 residues: 3-dehydroquinate synthase (359 aa).

NAD(+)-binding positions include 69–74, 103–107, 127–128, lysine 139, lysine 148, and 166–169; these read SGESSK, GVVGD, TT, and TLST. Zn(2+)-binding residues include glutamate 181, histidine 242, and histidine 259.

This sequence belongs to the sugar phosphate cyclases superfamily. Dehydroquinate synthase family. Requires NAD(+) as cofactor. Co(2+) serves as cofactor. It depends on Zn(2+) as a cofactor.

The protein localises to the cytoplasm. The enzyme catalyses 7-phospho-2-dehydro-3-deoxy-D-arabino-heptonate = 3-dehydroquinate + phosphate. It participates in metabolic intermediate biosynthesis; chorismate biosynthesis; chorismate from D-erythrose 4-phosphate and phosphoenolpyruvate: step 2/7. Functionally, catalyzes the conversion of 3-deoxy-D-arabino-heptulosonate 7-phosphate (DAHP) to dehydroquinate (DHQ). This Oceanobacillus iheyensis (strain DSM 14371 / CIP 107618 / JCM 11309 / KCTC 3954 / HTE831) protein is 3-dehydroquinate synthase.